The chain runs to 119 residues: Large ribosomal subunit protein uL22c (119 aa).

Belongs to the universal ribosomal protein uL22 family. In terms of assembly, part of the 50S ribosomal subunit.

It is found in the plastid. The protein resides in the chloroplast. Functionally, this protein binds specifically to 23S rRNA. The globular domain of the protein is located near the polypeptide exit tunnel on the outside of the subunit, while an extended beta-hairpin is found that lines the wall of the exit tunnel in the center of the 70S ribosome. The sequence is that of Large ribosomal subunit protein uL22c (rpl22) from Chlorokybus atmophyticus (Soil alga).